The sequence spans 240 residues: Eukaryotic translation initiation factor 4E-2 (240 aa).

The disordered stretch occupies residues 1–29 (MVVMDSPVSGRMADQNIDPNTTTSPSPIE). The segment covering 17–26 (IDPNTTTSPS) has biased composition (polar residues). EIF4G-binding stretches follow at residues 65-68 (HCFQ) and 75-111 (FDNP…NNIH). MRNA contacts are provided by residues 83 to 88 (NQVIWG), Lys115, and 133 to 134 (WE). The cysteines at positions 138 and 176 are disulfide-linked. The EIF4G-binding stretch occupies residues 159-168 (NTLLALVGEQ). MRNA-binding positions include 183-188 (RTRGDR) and 228-232 (KTLDR).

Belongs to the eukaryotic initiation factor 4E family. In terms of assembly, EIF4F is a multi-subunit complex, the composition of which varies with external and internal environmental conditions. It is composed of at least EIF4A, EIF4E and EIF4G. EIF4E is also known to interact with other partners. In higher plants two isoforms of EIF4F have been identified, named isoform EIF4F and isoform EIF(iso)4F. Isoform EIF4F has subunits p220 and p26, whereas isoform EIF(iso)4F has subunits p82 and p28. Post-translationally, according to the redox status, the Cys-138-Cys-176 disulfide bridge may have a role in regulating protein function by affecting its ability to bind capped mRNA.

The protein localises to the nucleus. Its subcellular location is the cytoplasm. Its function is as follows. Component of the protein complex eIF4F, which is involved in the recognition of the mRNA cap, ATP-dependent unwinding of 5'-terminal secondary structure and recruitment of mRNA to the ribosome. Recognizes and binds the 7-methylguanosine-containing mRNA cap during an early step in the initiation of protein synthesis and facilitates ribosome binding by inducing the unwinding of the mRNAs secondary structures. This Arabidopsis thaliana (Mouse-ear cress) protein is Eukaryotic translation initiation factor 4E-2.